We begin with the raw amino-acid sequence, 333 residues long: GDP-mannose transporter GONST1 (333 aa).

Helical transmembrane passes span 33–55 (ALLS…KFVL), 62–84 (AGIF…LSLM), 99–121 (VWFP…LKYI), 153–170 (VWAA…GGIT), 174–196 (FNAV…SLTL), 216–238 (SMVL…FFNE), 253–275 (FWMV…MWFL), 282–304 (TYSL…LFNV), and 308–325 (LQNS…VVFA).

This sequence belongs to the nucleotide-sugar transporter family. GDP-Mannose:GMP antiporter (GMA) (TC 2.A.7.13) subfamily.

The protein resides in the golgi apparatus membrane. Involved in the import of GDP-mannose from the cytoplasm into the Golgi lumen. Required for the luminal synthesis of a variety of plant cell surface components. Is required for the correct mannosylation of the glycosylinositol phosphoceramides (GIPC). Can indifferently transport GDP-mannose, GDP-Glucose, GDP-Fucose or GDP-Galactose in vitro. In Arabidopsis thaliana (Mouse-ear cress), this protein is GDP-mannose transporter GONST1.